Here is a 229-residue protein sequence, read N- to C-terminus: Potassium/proton antiporter CemA (229 aa).

3 helical membrane passes run 7–27, 114–134, and 189–209; these read FTPLLYLASLVFLPWWISLSF, IICFVILSGYSIWGNEELVIL, and ILSGLVSTFPVILDTLFKFWI.

It belongs to the CemA family.

Its subcellular location is the plastid. The protein resides in the chloroplast inner membrane. It carries out the reaction K(+)(in) + H(+)(out) = K(+)(out) + H(+)(in). Contributes to K(+)/H(+) antiport activity by supporting proton efflux to control proton extrusion and homeostasis in chloroplasts in a light-dependent manner to modulate photosynthesis. Prevents excessive induction of non-photochemical quenching (NPQ) under continuous-light conditions. Indirectly promotes efficient inorganic carbon uptake into chloroplasts. This chain is Potassium/proton antiporter CemA, found in Panax ginseng (Korean ginseng).